The sequence spans 460 residues: CCA-adding enzyme (460 aa).

Residues serine 50 and arginine 53 each contribute to the ATP site. CTP is bound by residues serine 50 and arginine 53. Mg(2+) contacts are provided by aspartate 62, aspartate 64, and aspartate 117. Histidine 140, lysine 159, and tyrosine 168 together coordinate ATP. 3 residues coordinate CTP: histidine 140, lysine 159, and tyrosine 168.

The protein belongs to the tRNA nucleotidyltransferase/poly(A) polymerase family. Archaeal CCA-adding enzyme subfamily. In terms of assembly, homodimer. Mg(2+) serves as cofactor.

The enzyme catalyses a tRNA precursor + 2 CTP + ATP = a tRNA with a 3' CCA end + 3 diphosphate. It catalyses the reaction a tRNA with a 3' CCA end + 2 CTP + ATP = a tRNA with a 3' CCACCA end + 3 diphosphate. Functionally, catalyzes the addition and repair of the essential 3'-terminal CCA sequence in tRNAs without using a nucleic acid template. Adds these three nucleotides in the order of C, C, and A to the tRNA nucleotide-73, using CTP and ATP as substrates and producing inorganic pyrophosphate. tRNA 3'-terminal CCA addition is required both for tRNA processing and repair. Also involved in tRNA surveillance by mediating tandem CCA addition to generate a CCACCA at the 3' terminus of unstable tRNAs. While stable tRNAs receive only 3'-terminal CCA, unstable tRNAs are marked with CCACCA and rapidly degraded. This Methanoregula boonei (strain DSM 21154 / JCM 14090 / 6A8) protein is CCA-adding enzyme.